The sequence spans 246 residues: Mast cell protease 1 (246 aa).

The signal sequence occupies residues 1–18 (MQALLFLMALLLPSGAGA). Residues 19 to 20 (EE) constitute a propeptide, activation peptide. The Peptidase S1 domain maps to 21–244 (IIGGVEARPH…YVPWIKTVIN (224 aa)). A disulfide bridge links Cys-50 with Cys-66. The active-site Charge relay system is His-65. A glycan (N-linked (GlcNAc...) asparagine) is linked at Asn-102. Catalysis depends on Asp-109, which acts as the Charge relay system. 2 disulfide bridges follow: Cys-143/Cys-208 and Cys-174/Cys-187. Ser-202 (charge relay system) is an active-site residue.

It belongs to the peptidase S1 family. Granzyme subfamily. As to expression, mucosal mast cells.

The protein resides in the secreted. It localises to the cytoplasmic granule. Functionally, has a chymotrypsin-like activity. In Mus musculus (Mouse), this protein is Mast cell protease 1 (Mcpt1).